Here is a 535-residue protein sequence, read N- to C-terminus: Methylmalonate-semialdehyde/malonate-semialdehyde dehydrogenase [acylating], mitochondrial (535 aa).

A mitochondrion-targeting transit peptide spans 1–33 (MAALLAAAAVRARILQVSSKVKSSPTWYSASSF). Lys-47, Lys-52, Lys-55, and Lys-76 each carry N6-acetyllysine; alternate. N6-succinyllysine; alternate occurs at positions 47, 52, 55, and 76. Lys-87 bears the N6-acetyllysine mark. N6-acetyllysine; alternate is present on residues Lys-117 and Lys-129. Residues Lys-117 and Lys-129 each carry the N6-succinyllysine; alternate modification. 6 residues coordinate NAD(+): Ala-183, Phe-185, Lys-209, Glu-212, Arg-213, and Ser-262. Ser-262 bears the Phosphoserine mark. The residue at position 298 (Lys-298) is an N6-acetyllysine. The Nucleophile role is filled by Cys-317. N6-acetyllysine occurs at positions 330 and 331. An N6-acetyllysine; alternate mark is found at Lys-364 and Lys-376. An N6-succinyllysine; alternate mark is found at Lys-364 and Lys-376. Residue Ser-380 is modified to Phosphoserine. At Lys-391 the chain carries N6-succinyllysine. Position 417 (Glu-417) interacts with NAD(+). Residue Lys-500 is modified to N6-acetyllysine. At Lys-517 the chain carries N6-succinyllysine.

The protein belongs to the aldehyde dehydrogenase family. As to quaternary structure, homotetramer.

The protein localises to the mitochondrion. The catalysed reaction is 3-oxopropanoate + NAD(+) + CoA + H2O = hydrogencarbonate + acetyl-CoA + NADH + H(+). It carries out the reaction 2-methyl-3-oxopropanoate + NAD(+) + CoA + H2O = propanoyl-CoA + hydrogencarbonate + NADH + H(+). The enzyme catalyses (R)-2-methyl-3-oxopropanoate + NAD(+) + CoA + H2O = propanoyl-CoA + hydrogencarbonate + NADH + H(+). It catalyses the reaction (S)-2-methyl-3-oxopropanoate + NAD(+) + CoA + H2O = propanoyl-CoA + hydrogencarbonate + NADH + H(+). Malonate and methylmalonate semialdehyde dehydrogenase involved in the catabolism of valine, thymine, and compounds catabolized by way of beta-alanine, including uracil and cytidine. This chain is Methylmalonate-semialdehyde/malonate-semialdehyde dehydrogenase [acylating], mitochondrial, found in Homo sapiens (Human).